The sequence spans 320 residues: Putative cyclin-D7-1 (320 aa).

Residues 1–46 form a disordered region; sequence MDDDDDTSFNNSLDLYCDEDPFDSTPPPPPPPPEQQQQAGTTTPDD. Residues 24–34 are compositionally biased toward pro residues; sequence STPPPPPPPPE. Over residues 35 to 44 the composition is skewed to low complexity; that stretch reads QQQQAGTTTP.

Belongs to the cyclin family. Cyclin D subfamily.

The protein is Putative cyclin-D7-1 (CYCD7-1) of Oryza sativa subsp. japonica (Rice).